Here is a 236-residue protein sequence, read N- to C-terminus: Peroxisomal membrane protein 11D (236 aa).

G2 carries the N-acetylglycine modification. Residues G2–K92 lie on the Cytoplasmic side of the membrane. A helical membrane pass occupies residues N93–G109. Residues R110–T207 are Lumenal-facing. A helical transmembrane segment spans residues P208–L227. Residues P228–P236 are Cytoplasmic-facing.

This sequence belongs to the peroxin-11 family. As to quaternary structure, homooligomer. Interacts with ARC5 and FIS1B on peroxisomes. As to expression, expressed in developing siliques.

It localises to the peroxisome membrane. In terms of biological role, involved in peroxisomal proliferation. Promotes peroxisomal duplication, aggregation or elongation without fission. In Arabidopsis thaliana (Mouse-ear cress), this protein is Peroxisomal membrane protein 11D (PEX11D).